The following is a 268-amino-acid chain: ClpXP adapter protein SpxH (268 aa).

Belongs to the SpxH family. As to quaternary structure, interacts with Spx.

The protein localises to the cytoplasm. Functionally, adapter protein required for efficient degradation of Spx by ClpXP under non-stress conditions. Interaction with Spx stabilizes Spx and exposes the C-terminus of Spx for recognition and proteolysis by ClpXP. This is ClpXP adapter protein SpxH from Staphylococcus aureus (strain Mu3 / ATCC 700698).